A 196-amino-acid chain; its full sequence is Inosine triphosphate pyrophosphatase 2 (196 aa).

20–25 provides a ligand contact to ITP; it reads TGNDGK. Mg(2+) is bound at residue Glu48. ITP contacts are provided by residues Lys61, 77-78, Lys94, 153-156, Lys177, and 182-183; these read DT, FGWD, and PR.

It belongs to the HAM1 NTPase family. As to quaternary structure, homodimer. It depends on Mg(2+) as a cofactor. The cofactor is Mn(2+).

The protein resides in the cytoplasm. It catalyses the reaction ITP + H2O = IMP + diphosphate + H(+). The enzyme catalyses dITP + H2O = dIMP + diphosphate + H(+). It carries out the reaction XTP + H2O = XMP + diphosphate + H(+). In terms of biological role, pyrophosphatase that hydrolyzes non-canonical purine nucleotides such as inosine triphosphate (ITP), deoxyinosine triphosphate (dITP) or xanthosine 5'-triphosphate (XTP) to their respective monophosphate derivatives. The enzyme does not distinguish between the deoxy- and ribose forms. Probably excludes non-canonical purines from RNA and DNA precursor pools, thus preventing their incorporation into RNA and DNA and avoiding chromosomal lesions. This chain is Inosine triphosphate pyrophosphatase 2, found in Trypanosoma cruzi (strain CL Brener).